Here is a 476-residue protein sequence, read N- to C-terminus: UPF0481 protein At3g47200 (476 aa).

The disordered stretch occupies residues 1–24 (MADKTDIISSSSDKASPPPPSAFR). Transmembrane regions (helical) follow at residues 133–153 (LMFM…IMSG) and 439–459 (AVLF…LSYL).

It belongs to the UPF0481 family.

It localises to the membrane. This Arabidopsis thaliana (Mouse-ear cress) protein is UPF0481 protein At3g47200.